The sequence spans 431 residues: Enolase (431 aa).

(2R)-2-phosphoglycerate is bound at residue glutamine 167. The active-site Proton donor is glutamate 209. Mg(2+)-binding residues include aspartate 246, glutamate 290, and aspartate 317. (2R)-2-phosphoglycerate contacts are provided by lysine 342, arginine 371, serine 372, and lysine 393. Residue lysine 342 is the Proton acceptor of the active site.

Belongs to the enolase family. Component of the RNA degradosome, a multiprotein complex involved in RNA processing and mRNA degradation. It depends on Mg(2+) as a cofactor.

Its subcellular location is the cytoplasm. It localises to the secreted. It is found in the cell surface. It catalyses the reaction (2R)-2-phosphoglycerate = phosphoenolpyruvate + H2O. It functions in the pathway carbohydrate degradation; glycolysis; pyruvate from D-glyceraldehyde 3-phosphate: step 4/5. Its function is as follows. Catalyzes the reversible conversion of 2-phosphoglycerate (2-PG) into phosphoenolpyruvate (PEP). It is essential for the degradation of carbohydrates via glycolysis. The polypeptide is Enolase (Serratia proteamaculans (strain 568)).